A 147-amino-acid chain; its full sequence is MYPAHLLVLLAVCVSLLGASDMPPQPLNLVQFSNMIQCANHGRRPTSNYMDYGCYCGKGGSGTPVDALDRCCKIHDDCYGEAEKSQNCAPYWTWYTWKCGSDGPQCDDSETGCKRIVCDCDVEAADCFAGAPYNNANWNIDTKKRCQ.

A signal peptide spans 1–19 (MYPAHLLVLLAVCVSLLGA). A propeptide spanning residues 20–27 (SDMPPQPL) is cleaved from the precursor. 7 disulfide bridges follow: Cys-38–Cys-99, Cys-54–Cys-146, Cys-56–Cys-72, Cys-71–Cys-127, Cys-78–Cys-120, Cys-88–Cys-113, and Cys-106–Cys-118. Ca(2+)-binding residues include Tyr-55, Gly-57, and Gly-59. The active site involves His-75. Asp-76 is a binding site for Ca(2+). Asp-121 is a catalytic residue.

It belongs to the phospholipase A2 family. Group I subfamily. D49 sub-subfamily. The cofactor is Ca(2+). Expressed by the venom gland.

The protein resides in the secreted. The catalysed reaction is a 1,2-diacyl-sn-glycero-3-phosphocholine + H2O = a 1-acyl-sn-glycero-3-phosphocholine + a fatty acid + H(+). Functionally, snake venom phospholipase A2 (PLA2) that inhibits collagen-induced platelet aggregation. PLA2 catalyzes the calcium-dependent hydrolysis of the 2-acyl groups in 3-sn-phosphoglycerides. The chain is Acidic phospholipase A2 S3-24 from Austrelaps superbus (Lowland copperhead snake).